A 460-amino-acid chain; its full sequence is MTHLKITGMTCDSCAAHVKEALEKVPGVQSAIVSYAKGAAQLALDPGTAPDALTAAVAGLGYKAMLADAPPTDNRTGLFDKVRGWMGAADKGSGAERPLQVAVIGSGGAAMAAALKAVEQGAQVTLIERGTIGGTCVNVGCVPSKIMIRAAHIAHLRRESPFDGGMPPTPPTILRERLLAQQQARVEELRHAKYEGILDGNSAITVRHGEARFKDDRDLSVSLNEGGERVVMFDRCLVATGASPAMPPIPGLKESPYWTSTEALVSDTIPERLAVIGSSVVALELAQAFARLGSQVTILARNTLFFRDDPSIGEAVTAAFRAEGIKVLEHTQASQVAHVNGEDPQVATVGYSEAEAHHDGIETDSRTLTLDNVPRALANFDTRGFIKLVIEEGSGRLIGVQVVAPEAGELIQTAVLAIRNRMTVQELADQLFPYLTMVEGLKLAAQTFTKDVKQLSCCAG.

In terms of domain architecture, HMA spans 1 to 65; that stretch reads MTHLKITGMT…AVAGLGYKAM (65 aa). A metal cation contacts are provided by Cys11 and Cys14. 3 residues coordinate FAD: Ala110, Gly130, and Thr135. An intrachain disulfide couples Cys136 to Cys141. 2 residues coordinate FAD: Lys145 and Ala211. Hg(2+) contacts are provided by Cys457 and Cys458.

Belongs to the class-I pyridine nucleotide-disulfide oxidoreductase family. As to quaternary structure, homodimer. Requires FAD as cofactor.

It carries out the reaction Hg + NADP(+) + H(+) = Hg(2+) + NADPH. Resistance to Hg(2+) in bacteria appears to be governed by a specialized system which includes mercuric reductase. MerA protein is responsible for volatilizing mercury as Hg(0). The chain is Mercuric reductase (merA) from Serratia marcescens.